We begin with the raw amino-acid sequence, 151 residues long: Transcriptional regulator MraZ (151 aa).

SpoVT-AbrB domains follow at residues Ala-5 to Glu-52 and Ala-81 to Ala-124.

The protein belongs to the MraZ family. In terms of assembly, forms oligomers.

It localises to the cytoplasm. Its subcellular location is the nucleoid. This is Transcriptional regulator MraZ from Pseudomonas savastanoi pv. phaseolicola (strain 1448A / Race 6) (Pseudomonas syringae pv. phaseolicola (strain 1448A / Race 6)).